The sequence spans 143 residues: Agaricus bisporus lectin (143 aa).

Beta-D-Gal-(1-&gt;3)-alpha-D-GalNAc contacts are provided by alanine 29, serine 48, glycine 49, and asparagine 73. 3 residues coordinate N-acetyl-beta-D-glucosamine: threonine 82, arginine 103, and tyrosine 114.

Belongs to the fungal fruit body lectin family. As to quaternary structure, homotetramer.

Functionally, lectin that recognizes O-linked galactose-beta-1,3-N-acetylgalactosamine, a disaccharide (Thomsen-Friedenreich antigen or T-disaccharide), present on cell surface glycoproteins. Can also bind galactose-beta-1,3-N-acetylglucosamine. Does not bind monosaccharides. Can be internalized by clathrin-coated vesicles after binding to surface glycoproteins. After internalization it inhibits nuclear import of nuclear localization signal dependent proteins. Inhibits proliferation of malignant cells without cytotoxicity for normal cells. The polypeptide is Agaricus bisporus lectin (Agaricus bisporus (White button mushroom)).